The primary structure comprises 130 residues: Glycine cleavage system H protein (130 aa).

The region spanning 24–106 is the Lipoyl-binding domain; that stretch reads TFTVGITDHA…YGDGWLYRIT (83 aa). Position 65 is an N6-lipoyllysine (Lys65).

This sequence belongs to the GcvH family. As to quaternary structure, the glycine cleavage system is composed of four proteins: P, T, L and H. It depends on (R)-lipoate as a cofactor.

In terms of biological role, the glycine cleavage system catalyzes the degradation of glycine. The H protein shuttles the methylamine group of glycine from the P protein to the T protein. The polypeptide is Glycine cleavage system H protein (Coxiella burnetii (strain CbuK_Q154) (Coxiella burnetii (strain Q154))).